A 156-amino-acid polypeptide reads, in one-letter code: Small ribosomal subunit protein uS7 (156 aa).

Belongs to the universal ribosomal protein uS7 family. As to quaternary structure, part of the 30S ribosomal subunit. Contacts proteins S9 and S11.

In terms of biological role, one of the primary rRNA binding proteins, it binds directly to 16S rRNA where it nucleates assembly of the head domain of the 30S subunit. Is located at the subunit interface close to the decoding center, probably blocks exit of the E-site tRNA. The chain is Small ribosomal subunit protein uS7 from Synechococcus sp. (strain CC9902).